The chain runs to 305 residues: Putative lipid kinase SAB0675c (305 aa).

Residues 3 to 139 form the DAGKc domain; that stretch reads NKYTHGVLFY…YDVIKINNQY (137 aa). ATP-binding positions include Ser-44, 74–80, and Thr-101; that span reads GDGTVNE. Mg(2+) is bound by residues Ser-220, Asp-223, and Glu-225. Residue Glu-281 is the Proton acceptor of the active site.

The protein belongs to the diacylglycerol/lipid kinase family. Mg(2+) serves as cofactor.

In terms of biological role, may catalyze the ATP-dependent phosphorylation of lipids other than diacylglycerol (DAG). The sequence is that of Putative lipid kinase SAB0675c from Staphylococcus aureus (strain bovine RF122 / ET3-1).